A 412-amino-acid chain; its full sequence is Histidinol dehydrogenase (412 aa).

NAD(+) is bound by residues Tyr-118, Gln-176, and Asn-199. Residues Thr-222, Gln-244, and His-247 each coordinate substrate. Residues Gln-244 and His-247 each coordinate Zn(2+). Catalysis depends on proton acceptor residues Glu-311 and His-312. Residues His-312, Asp-345, Glu-399, and His-404 each contribute to the substrate site. Asp-345 serves as a coordination point for Zn(2+). His-404 is a Zn(2+) binding site.

This sequence belongs to the histidinol dehydrogenase family. It depends on Zn(2+) as a cofactor.

It catalyses the reaction L-histidinol + 2 NAD(+) + H2O = L-histidine + 2 NADH + 3 H(+). Its pathway is amino-acid biosynthesis; L-histidine biosynthesis; L-histidine from 5-phospho-alpha-D-ribose 1-diphosphate: step 9/9. In terms of biological role, catalyzes the sequential NAD-dependent oxidations of L-histidinol to L-histidinaldehyde and then to L-histidine. The chain is Histidinol dehydrogenase from Thermus thermophilus (strain ATCC BAA-163 / DSM 7039 / HB27).